Consider the following 405-residue polypeptide: Low-salt glycan biosynthesis sulfotransferase Agl7 (405 aa).

3 residues coordinate Ca(2+): D24, D201, and H202.

It belongs to the sulfatase family. Ca(2+) is required as a cofactor.

It functions in the pathway protein modification; protein glycosylation. Its pathway is cell surface structure biogenesis; S-layer biogenesis. Functionally, involved in N-glycan biosynthetic pathway that takes place under low-salt conditions (1.75 M instead of 3.4 M). Participates in the formation of the tetrasaccharide present at 'Asn-532' of S-layer glycoprotein Csg, consisting of a sulfated hexose, 2 hexoses and rhamnose. Mediates sulfation of sugar 1 in the tetrasaccharide. In Haloferax volcanii (strain ATCC 29605 / DSM 3757 / JCM 8879 / NBRC 14742 / NCIMB 2012 / VKM B-1768 / DS2) (Halobacterium volcanii), this protein is Low-salt glycan biosynthesis sulfotransferase Agl7.